We begin with the raw amino-acid sequence, 93 residues long: Acyl carrier protein AcpXL (93 aa).

A Carrier domain is found at 2–88 (STTFDKVAKI…NLCAKIDALV (87 aa)). O-(pantetheine 4'-phosphoryl)serine is present on S37.

4'-phosphopantetheine is transferred from CoA to a specific serine of apo-ACP by AcpS. This modification is essential for activity because fatty acids are bound in thioester linkage to the sulfhydryl of the prosthetic group.

Its subcellular location is the cytoplasm. It participates in glycolipid biosynthesis; KDO(2)-lipid A biosynthesis. Carrier of the growing fatty acid chain in fatty acid biosynthesis. Is involved in the transfer of long hydroxylated fatty acids to lipid A. In Mesorhizobium japonicum (strain LMG 29417 / CECT 9101 / MAFF 303099) (Mesorhizobium loti (strain MAFF 303099)), this protein is Acyl carrier protein AcpXL (acpXL).